A 541-amino-acid chain; its full sequence is Cytochrome bc1 complex cytochrome b subunit (541 aa).

The chain crosses the membrane as a helical span at residues 36–56 (FLLGEIALYSFIILILTGVYL). The heme site is built by His-105 and His-119. 3 helical membrane-spanning segments follow: residues 109-129 (ALMF…TGAF), 137-157 (WVIG…GYSL), and 169-189 (IMSA…WMIF). Heme is bound by residues His-206 and His-221. A run of 5 helical transmembrane segments spans residues 207–227 (VLII…LVWY), 256–276 (SVAF…VTTI), 325–345 (VFWV…YPWI), 371–391 (LGVM…NDIW), and 408–428 (IGLI…CIGL).

This sequence belongs to the cytochrome b family. As to quaternary structure, the cytochrome bc1 complex is composed of a cytochrome b (QcrB), the Rieske protein iron-sulfur (QcrA) and a diheme cytochrome c (QcrC) subunit. It depends on heme as a cofactor.

It localises to the cell membrane. It carries out the reaction a quinol + 2 Fe(III)-[cytochrome c](out) = a quinone + 2 Fe(II)-[cytochrome c](out) + 2 H(+)(out). Cytochrome b subunit of the cytochrome bc1 complex, an essential component of the respiratory electron transport chain required for ATP synthesis. The bc1 complex catalyzes the oxidation of menaquinol and the reduction of cytochrome c in the respiratory chain. The bc1 complex operates through a Q-cycle mechanism that couples electron transfer to generation of the proton gradient that drives ATP synthesis. In Corynebacterium efficiens (strain DSM 44549 / YS-314 / AJ 12310 / JCM 11189 / NBRC 100395), this protein is Cytochrome bc1 complex cytochrome b subunit (qcrB).